A 2077-amino-acid chain; its full sequence is Large tegument protein deneddylase (2077 aa).

Positions 1–231 (MKIITSSTNQ…PDIAIALDKF (231 aa)) are deubiquitination activity. Residues 3 to 221 (IITSSTNQND…ELLILKTYKD (219 aa)) enclose the Peptidase C76 domain. Residues C23, D156, and H158 contribute to the active site. S287 is a region of interest (interaction with inner tegument protein). The segment at 1982 to 2004 (PPNNTESTRPGKQTSETLTNKNL) is disordered.

Belongs to the herpesviridae large tegument protein family. Interacts with host CUL1 and CUL4A; these interactions inhibit the E3 ligase activity of cullins. Interacts with inner tegument protein. Interacts with capsid vertex specific component CVC2. Interacts with the major capsid protein/MCP.

It is found in the virion tegument. The protein resides in the host cytoplasm. Its subcellular location is the host nucleus. The enzyme catalyses Thiol-dependent hydrolysis of ester, thioester, amide, peptide and isopeptide bonds formed by the C-terminal Gly of ubiquitin (a 76-residue protein attached to proteins as an intracellular targeting signal).. Functionally, large tegument protein that plays multiple roles in the viral cycle. During viral entry, remains associated with the capsid while most of the tegument is detached and participates in the capsid transport toward the host nucleus. Plays a role in the routing of the capsid at the nuclear pore complex and subsequent uncoating. Within the host nucleus, acts as a deneddylase and promotes the degradation of nuclear CRLs (cullin-RING ubiquitin ligases) and thereby stabilizes nuclear CRL substrates, while cytoplasmic CRLs remain unaffected. These modifications prevent host cell cycle S-phase progression and create a favorable environment allowing efficient viral genome replication. Participates later in the secondary envelopment of capsids. Indeed, plays a linker role for the association of the outer viral tegument to the capsids together with the inner tegument protein. In Homo sapiens (Human), this protein is Large tegument protein deneddylase (U31).